The primary structure comprises 145 residues: 3-dehydroquinate dehydratase (145 aa).

Y24 (proton acceptor) is an active-site residue. The substrate site is built by N76, H82, and D89. H102 (proton donor) is an active-site residue. Residues 103 to 104 and R113 contribute to the substrate site; that span reads VS.

The protein belongs to the type-II 3-dehydroquinase family. Homododecamer.

The catalysed reaction is 3-dehydroquinate = 3-dehydroshikimate + H2O. It functions in the pathway metabolic intermediate biosynthesis; chorismate biosynthesis; chorismate from D-erythrose 4-phosphate and phosphoenolpyruvate: step 3/7. Catalyzes a trans-dehydration via an enolate intermediate. This Janthinobacterium sp. (strain Marseille) (Minibacterium massiliensis) protein is 3-dehydroquinate dehydratase.